We begin with the raw amino-acid sequence, 499 residues long: Pyruvate kinase 2 (499 aa).

Residue Arg-50 coordinates substrate. Residues Asn-52, Ser-54, Asp-84, and Thr-85 each coordinate K(+). 52-55 (NFSH) contacts ATP. Arg-91 provides a ligand contact to ATP. Glu-241 contacts Mg(2+). Positions 264, 265, and 297 each coordinate substrate. A Mg(2+)-binding site is contributed by Asp-265.

Belongs to the pyruvate kinase family. In terms of assembly, homotetramer. It depends on Mg(2+) as a cofactor. K(+) is required as a cofactor.

It catalyses the reaction pyruvate + ATP = phosphoenolpyruvate + ADP + H(+). The protein operates within carbohydrate degradation; glycolysis; pyruvate from D-glyceraldehyde 3-phosphate: step 5/5. Activated by fructose 2,6-bisphosphate, activated by the effector in a cooperative manner. This chain is Pyruvate kinase 2 (PYK2), found in Trypanosoma brucei brucei.